The sequence spans 222 residues: Small ribosomal subunit protein uS7m (222 aa).

The transit peptide at 1–14 directs the protein to the mitochondrion; that stretch reads MSKKLANFAQKRWI.

This sequence belongs to the universal ribosomal protein uS7 family. In terms of assembly, component of the mitochondrial ribosome small subunit (28S) which comprises a 12S rRNA and about 30 distinct proteins.

The protein resides in the mitochondrion. The chain is Small ribosomal subunit protein uS7m (mrps-7) from Caenorhabditis briggsae.